We begin with the raw amino-acid sequence, 555 residues long: CTP synthase (555 aa).

Residues 1–265 form an amidoligase domain region; the sequence is MTRYIFITGG…GNRVCEKLNI (265 aa). Ser13 contacts CTP. Ser13 contacts UTP. ATP contacts are provided by residues 14–19 and Asp71; that span reads SLGKGI. Positions 71 and 139 each coordinate Mg(2+). CTP contacts are provided by residues 146-148, 186-191, and Lys222; these read DIE and KTKPTQ. UTP-binding positions include 186 to 191 and Lys222; that span reads KTKPTQ. In terms of domain architecture, Glutamine amidotransferase type-1 spans 290–541; the sequence is TVAVVGKYVD…IKAGLAAKEA (252 aa). Position 351 (Gly351) interacts with L-glutamine. Cys378 serves as the catalytic Nucleophile; for glutamine hydrolysis. Residues 379–382, Glu402, and Arg469 contribute to the L-glutamine site; that span reads LGMQ. Catalysis depends on residues His514 and Glu516.

Belongs to the CTP synthase family. Homotetramer.

The enzyme catalyses UTP + L-glutamine + ATP + H2O = CTP + L-glutamate + ADP + phosphate + 2 H(+). The catalysed reaction is L-glutamine + H2O = L-glutamate + NH4(+). It carries out the reaction UTP + NH4(+) + ATP = CTP + ADP + phosphate + 2 H(+). The protein operates within pyrimidine metabolism; CTP biosynthesis via de novo pathway; CTP from UDP: step 2/2. With respect to regulation, allosterically activated by GTP, when glutamine is the substrate; GTP has no effect on the reaction when ammonia is the substrate. The allosteric effector GTP functions by stabilizing the protein conformation that binds the tetrahedral intermediate(s) formed during glutamine hydrolysis. Inhibited by the product CTP, via allosteric rather than competitive inhibition. Catalyzes the ATP-dependent amination of UTP to CTP with either L-glutamine or ammonia as the source of nitrogen. Regulates intracellular CTP levels through interactions with the four ribonucleotide triphosphates. This is CTP synthase from Coxiella burnetii (strain CbuG_Q212) (Coxiella burnetii (strain Q212)).